The chain runs to 498 residues: Pyridine nucleotide-disulfide oxidoreductase domain-containing protein 1 (498 aa).

Methionine 1 is subject to N-acetylmethionine.

It belongs to the class-I pyridine nucleotide-disulfide oxidoreductase family. PYROXD1 subfamily. Requires FAD as cofactor.

The protein resides in the nucleus. The protein localises to the cytoplasm. It localises to the myofibril. Its subcellular location is the sarcomere. Probable FAD-dependent oxidoreductase; involved in the cellular oxidative stress response. Required for normal sarcomere structure and muscle fiber integrity. In Mus musculus (Mouse), this protein is Pyridine nucleotide-disulfide oxidoreductase domain-containing protein 1 (Pyroxd1).